The chain runs to 339 residues: DNA-directed RNA polymerase subunit alpha (339 aa).

An alpha N-terminal domain (alpha-NTD) region spans residues 1–233 (MVREEVAGST…DLFLPFLHAE (233 aa)). The interval 264–339 (KKGIPLNCIF…IDLLKNKLSF (76 aa)) is alpha C-terminal domain (alpha-CTD).

Belongs to the RNA polymerase alpha chain family. In plastids the minimal PEP RNA polymerase catalytic core is composed of four subunits: alpha, beta, beta', and beta''. When a (nuclear-encoded) sigma factor is associated with the core the holoenzyme is formed, which can initiate transcription.

Its subcellular location is the plastid. It localises to the chloroplast. It catalyses the reaction RNA(n) + a ribonucleoside 5'-triphosphate = RNA(n+1) + diphosphate. In terms of biological role, DNA-dependent RNA polymerase catalyzes the transcription of DNA into RNA using the four ribonucleoside triphosphates as substrates. The sequence is that of DNA-directed RNA polymerase subunit alpha from Secale strictum (Mountain rye).